Consider the following 578-residue polypeptide: V-type ATP synthase alpha chain (578 aa).

228–235 (GPFGSGKT) contacts ATP.

It belongs to the ATPase alpha/beta chains family.

The enzyme catalyses ATP + H2O + 4 H(+)(in) = ADP + phosphate + 5 H(+)(out). In terms of biological role, produces ATP from ADP in the presence of a proton gradient across the membrane. The V-type alpha chain is a catalytic subunit. The chain is V-type ATP synthase alpha chain from Thermus thermophilus (strain ATCC BAA-163 / DSM 7039 / HB27).